The primary structure comprises 178 residues: Large ribosomal subunit protein uL6 (178 aa).

It belongs to the universal ribosomal protein uL6 family. As to quaternary structure, part of the 50S ribosomal subunit.

In terms of biological role, this protein binds to the 23S rRNA, and is important in its secondary structure. It is located near the subunit interface in the base of the L7/L12 stalk, and near the tRNA binding site of the peptidyltransferase center. The protein is Large ribosomal subunit protein uL6 of Buchnera aphidicola subsp. Schizaphis graminum (strain Sg).